We begin with the raw amino-acid sequence, 588 residues long: ustiloxin B cluster transcription factor ustR (588 aa).

The zn(2)-C6 fungal-type DNA-binding region spans 11–38 (CWTCRLRRKKCNEDGQPCSNCEARGVFC). Residues 68–92 (RTRRARATPTNSINGEPRRPSIDMN) are disordered.

It localises to the nucleus. Transcription factor that regulates the expression of the gene cluster that mediates the biosynthesis of ustiloxin B, an antimitotic tetrapeptide. The protein is ustiloxin B cluster transcription factor ustR of Aspergillus flavus (strain ATCC 200026 / FGSC A1120 / IAM 13836 / NRRL 3357 / JCM 12722 / SRRC 167).